The following is a 316-amino-acid chain: CD-NTase-associated protein 12 (316 aa).

A TIR domain is found at 4–121 (RIFIGSSSEG…MLGITQTRYE (118 aa)). An STING domain region spans residues 161-316 (STVIAISYFE…ECVEIIEPQP (156 aa)). 3',3'-c-di-GMP is bound by residues Phe172, Pro237, and Asp253.

This sequence in the C-terminal section; belongs to the bacterial STING family. As to quaternary structure, forms homodimers; in the presence of c-di-GMP forms filaments with an ordered array of parallel-stacked subunits.

It carries out the reaction NAD(+) + H2O = ADP-D-ribose + nicotinamide + H(+). Its activity is regulated as follows. NAD(+) hydrolase activity is strongly stimulated by c-di-GMP, weakly by 3'3'-cGAMP, very weakly by c-di-AMP but not at all by 2'3'-cGAMP. Self-association of TIR domains is required for NADase activity. In terms of biological role, effector protein of a CBASS antiviral system with NAD(+) hydrolase activity. CBASS (cyclic oligonucleotide-based antiphage signaling system) provides immunity against bacteriophage. The CD-NTase protein synthesizes cyclic nucleotides in response to infection; these serve as specific second messenger signals. The signals activate a diverse range of effectors, leading to bacterial cell death and thus abortive phage infection. A type I-D(GG) CBASS system. Its function is as follows. Binds c-di-GMP (synthesized by the cognate CdnE encoded upstream in the same operon) but not c-di-AMP, 2'-3'-cGAMP, 3'-3'-cGAMP or cUMP-AMP (tested without the N-terminal TIR domain). Upon activation by c-di-GMP forms filaments which hydrolyze NAD(+); filament formation is required for enzyme activation. In Lachnospiraceae bacterium (strain RUG226), this protein is CD-NTase-associated protein 12.